Reading from the N-terminus, the 209-residue chain is Urease accessory protein UreE (209 aa).

The span at 170-196 shows a compositional bias: basic and acidic residues; it reads EHHGHSHSHSHDHDHDHDHDHDHDHQH. Residues 170–209 form a disordered region; it reads EHHGHSHSHSHDHDHDHDHDHDHDHQHGPSCSHGHHHGHR.

The protein belongs to the UreE family.

It localises to the cytoplasm. Its function is as follows. Involved in urease metallocenter assembly. Binds nickel. Probably functions as a nickel donor during metallocenter assembly. The polypeptide is Urease accessory protein UreE (Burkholderia mallei (strain NCTC 10247)).